Consider the following 194-residue polypeptide: Holliday junction branch migration complex subunit RuvA (194 aa).

The tract at residues 1-64 is domain I; the sequence is MISRLTGKLV…EDAHLLFGFA (64 aa). The interval 65-143 is domain II; it reads TAEERKTFRQ…AHAVTDGLFA (79 aa). Residues 144 to 147 form a flexible linker region; sequence AAPA. Residues 147–194 are domain III; sequence AADETEDIVGTLLALGYSEREAKAAVKGVPEGTDVGEGVRLALKNLLK.

This sequence belongs to the RuvA family. Homotetramer. Forms an RuvA(8)-RuvB(12)-Holliday junction (HJ) complex. HJ DNA is sandwiched between 2 RuvA tetramers; dsDNA enters through RuvA and exits via RuvB. An RuvB hexamer assembles on each DNA strand where it exits the tetramer. Each RuvB hexamer is contacted by two RuvA subunits (via domain III) on 2 adjacent RuvB subunits; this complex drives branch migration. In the full resolvosome a probable DNA-RuvA(4)-RuvB(12)-RuvC(2) complex forms which resolves the HJ.

It is found in the cytoplasm. Its function is as follows. The RuvA-RuvB-RuvC complex processes Holliday junction (HJ) DNA during genetic recombination and DNA repair, while the RuvA-RuvB complex plays an important role in the rescue of blocked DNA replication forks via replication fork reversal (RFR). RuvA specifically binds to HJ cruciform DNA, conferring on it an open structure. The RuvB hexamer acts as an ATP-dependent pump, pulling dsDNA into and through the RuvAB complex. HJ branch migration allows RuvC to scan DNA until it finds its consensus sequence, where it cleaves and resolves the cruciform DNA. In Neisseria meningitidis serogroup A / serotype 4A (strain DSM 15465 / Z2491), this protein is Holliday junction branch migration complex subunit RuvA.